The sequence spans 563 residues: Eukaryotic translation initiation factor 3 subunit D-1 (563 aa).

The disordered stretch occupies residues Val-98 to Ser-167. Residues Lys-100–Asn-121 are compositionally biased toward basic residues. Thr-128 is subject to Phosphothreonine. The tract at residues Glu-291–Pro-305 is RNA gate.

Belongs to the eIF-3 subunit D family. In terms of assembly, component of the eukaryotic translation initiation factor 3 (eIF-3) complex. The eIF-3 complex interacts with pix.

The protein resides in the cytoplasm. Functionally, mRNA cap-binding component of the eukaryotic translation initiation factor 3 (eIF-3) complex, which is involved in protein synthesis of a specialized repertoire of mRNAs and, together with other initiation factors, stimulates binding of mRNA and methionyl-tRNAi to the 40S ribosome. The eIF-3 complex specifically targets and initiates translation of a subset of mRNAs involved in cell proliferation. In the eIF-3 complex, eif3d specifically recognizes and binds the 7-methylguanosine cap of a subset of mRNAs. The polypeptide is Eukaryotic translation initiation factor 3 subunit D-1 (Drosophila mojavensis (Fruit fly)).